Reading from the N-terminus, the 83-residue chain is Exodeoxyribonuclease 7 small subunit (83 aa).

The protein belongs to the XseB family. As to quaternary structure, heterooligomer composed of large and small subunits.

It localises to the cytoplasm. It carries out the reaction Exonucleolytic cleavage in either 5'- to 3'- or 3'- to 5'-direction to yield nucleoside 5'-phosphates.. In terms of biological role, bidirectionally degrades single-stranded DNA into large acid-insoluble oligonucleotides, which are then degraded further into small acid-soluble oligonucleotides. This chain is Exodeoxyribonuclease 7 small subunit, found in Afipia carboxidovorans (strain ATCC 49405 / DSM 1227 / KCTC 32145 / OM5) (Oligotropha carboxidovorans).